The chain runs to 181 residues: Isopentenyl-diphosphate Delta-isomerase (181 aa).

Mn(2+) is bound by residues histidine 24 and histidine 30. Residues 28 to 168 (LLHLAFSVLL…PDTFSVWFPT (141 aa)) form the Nudix hydrolase domain. The active site involves cysteine 68. Histidine 70 serves as a coordination point for Mn(2+). Mg(2+) is bound at residue glutamate 88. Glutamate 117 and glutamate 119 together coordinate Mn(2+). Residue glutamate 119 is part of the active site.

The protein belongs to the IPP isomerase type 1 family. Requires Mg(2+) as cofactor. The cofactor is Mn(2+).

It is found in the cytoplasm. The catalysed reaction is isopentenyl diphosphate = dimethylallyl diphosphate. It participates in isoprenoid biosynthesis; dimethylallyl diphosphate biosynthesis; dimethylallyl diphosphate from isopentenyl diphosphate: step 1/1. Functionally, catalyzes the 1,3-allylic rearrangement of the homoallylic substrate isopentenyl (IPP) to its highly electrophilic allylic isomer, dimethylallyl diphosphate (DMAPP). In Aliivibrio fischeri (strain MJ11) (Vibrio fischeri), this protein is Isopentenyl-diphosphate Delta-isomerase.